The following is a 432-amino-acid chain: Glutamyl-tRNA reductase (432 aa).

Substrate-binding positions include 49 to 52, Ser101, 106 to 108, and Gln112; these read TCNR and ESQ. Residue Cys50 is the Nucleophile of the active site. 181 to 186 is a binding site for NADP(+); sequence GAGETI. The tract at residues 410-432 is disordered; the sequence is KPGYHHPTLQTTIVKTDETDPAS.

This sequence belongs to the glutamyl-tRNA reductase family. As to quaternary structure, homodimer.

It catalyses the reaction (S)-4-amino-5-oxopentanoate + tRNA(Glu) + NADP(+) = L-glutamyl-tRNA(Glu) + NADPH + H(+). It functions in the pathway porphyrin-containing compound metabolism; protoporphyrin-IX biosynthesis; 5-aminolevulinate from L-glutamyl-tRNA(Glu): step 1/2. Catalyzes the NADPH-dependent reduction of glutamyl-tRNA(Glu) to glutamate 1-semialdehyde (GSA). In Xylella fastidiosa (strain M23), this protein is Glutamyl-tRNA reductase.